The chain runs to 152 residues: D-erythrulose-4-phosphate isomerase (152 aa).

The active-site Proton acceptor is the Cys-67.

This sequence belongs to the LacAB/RpiB family.

The catalysed reaction is D-erythrulose 4-phosphate = D-erythrose 4-phosphate. Its pathway is carbohydrate metabolism. Its function is as follows. Involved in catabolism of D-apiose. Catalyzes the isomerization of D-erythrulose 4-phosphate to D-erythrose 4-phosphate. This chain is D-erythrulose-4-phosphate isomerase, found in Pectobacterium atrosepticum (strain SCRI 1043 / ATCC BAA-672) (Erwinia carotovora subsp. atroseptica).